Here is a 597-residue protein sequence, read N- to C-terminus: Medium/long-chain-fatty-acid--CoA ligase FadD6 (597 aa).

Belongs to the ATP-dependent AMP-binding enzyme family.

It carries out the reaction a medium-chain fatty acid + ATP + CoA = a medium-chain fatty acyl-CoA + AMP + diphosphate. It catalyses the reaction a long-chain fatty acid + ATP + CoA = a long-chain fatty acyl-CoA + AMP + diphosphate. The catalysed reaction is hexanoate + ATP + CoA = hexanoyl-CoA + AMP + diphosphate. The enzyme catalyses octanoate + ATP + CoA = octanoyl-CoA + AMP + diphosphate. It carries out the reaction decanoate + ATP + CoA = decanoyl-CoA + AMP + diphosphate. It catalyses the reaction dodecanoate + ATP + CoA = dodecanoyl-CoA + AMP + diphosphate. The catalysed reaction is tetradecanoate + ATP + CoA = tetradecanoyl-CoA + AMP + diphosphate. The enzyme catalyses hexadecanoate + ATP + CoA = hexadecanoyl-CoA + AMP + diphosphate. It carries out the reaction octadecanoate + ATP + CoA = octadecanoyl-CoA + AMP + diphosphate. It catalyses the reaction 9-decenoate + ATP + CoA = 9-decenoyl-CoA + AMP + diphosphate. The catalysed reaction is (9Z)-octadecenoate + ATP + CoA = (9Z)-octadecenoyl-CoA + AMP + diphosphate. The enzyme catalyses 2-hydroxyhexadecanoate + ATP + CoA = 2-hydroxyhexadecanoyl-CoA + AMP + diphosphate. It carries out the reaction 3-hydroxytetradecanoate + ATP + CoA = 3-hydroxytetradecanoyl-CoA + AMP + diphosphate. It catalyses the reaction 12-hydroxyoctadecanoate + ATP + CoA = 12-hydroxyoctadecanoyl-CoA + AMP + diphosphate. The catalysed reaction is 15-hydroxypentadecanoate + ATP + CoA = 15-hydroxypentadecanoyl-CoA + AMP + diphosphate. The enzyme catalyses 16-hydroxyhexadecanoate + ATP + CoA = 16-hydroxyhexadecanoyl-CoA + AMP + diphosphate. It carries out the reaction 2-methylhexadecanoate + ATP + CoA = 2-methylhexadecanoyl-CoA + AMP + diphosphate. It catalyses the reaction 3-methylundecanoate + ATP + CoA = 3-methylundecanoyl-CoA + AMP + diphosphate. The catalysed reaction is 12-methyltridecanoate + ATP + CoA = 12-methyltridecanoyl-CoA + AMP + diphosphate. The enzyme catalyses 12-methyloctadecanoate + ATP + CoA = 12-methyloctadecanoyl-CoA + AMP + diphosphate. In terms of biological role, catalyzes the activation of medium/long-chain fatty acids as acyl-coenzyme A (acyl-CoA). May play a role in the uptake of fatty acids by trapping them metabolically as CoA esters. May also play an important role in the channeling of fatty acids into triacylglycerol (TAG) for use by Mycobacterium during its dormancy. The sequence is that of Medium/long-chain-fatty-acid--CoA ligase FadD6 from Mycobacterium tuberculosis (strain ATCC 25618 / H37Rv).